The chain runs to 203 residues: SPbeta prophage-derived uncharacterized protein YouA (203 aa).

A disordered region spans residues 1 to 23 (MAFLNQDGDKYTSAKDDGTGNPI). The span at 7-18 (DGDKYTSAKDDG) shows a compositional bias: basic and acidic residues.

This Bacillus subtilis (strain 168) protein is SPbeta prophage-derived uncharacterized protein YouA (youA).